We begin with the raw amino-acid sequence, 178 residues long: ATP synthase subunit b (178 aa).

The chain crosses the membrane as a helical span at residues 30–50 (FFFVLAIFLIVLAVIGTFVVP).

It belongs to the ATPase B chain family. F-type ATPases have 2 components, F(1) - the catalytic core - and F(0) - the membrane proton channel. F(1) has five subunits: alpha(3), beta(3), gamma(1), delta(1), epsilon(1). F(0) has three main subunits: a(1), b(2) and c(10-14). The alpha and beta chains form an alternating ring which encloses part of the gamma chain. F(1) is attached to F(0) by a central stalk formed by the gamma and epsilon chains, while a peripheral stalk is formed by the delta and b chains.

It is found in the cell membrane. F(1)F(0) ATP synthase produces ATP from ADP in the presence of a proton or sodium gradient. F-type ATPases consist of two structural domains, F(1) containing the extramembraneous catalytic core and F(0) containing the membrane proton channel, linked together by a central stalk and a peripheral stalk. During catalysis, ATP synthesis in the catalytic domain of F(1) is coupled via a rotary mechanism of the central stalk subunits to proton translocation. Its function is as follows. Component of the F(0) channel, it forms part of the peripheral stalk, linking F(1) to F(0). The sequence is that of ATP synthase subunit b from Mycobacterium avium (strain 104).